Reading from the N-terminus, the 339-residue chain is Phosphoribosylformylglycinamidine cyclo-ligase (339 aa).

This sequence belongs to the AIR synthase family.

The protein resides in the cytoplasm. It carries out the reaction 2-formamido-N(1)-(5-O-phospho-beta-D-ribosyl)acetamidine + ATP = 5-amino-1-(5-phospho-beta-D-ribosyl)imidazole + ADP + phosphate + H(+). It participates in purine metabolism; IMP biosynthesis via de novo pathway; 5-amino-1-(5-phospho-D-ribosyl)imidazole from N(2)-formyl-N(1)-(5-phospho-D-ribosyl)glycinamide: step 2/2. The protein is Phosphoribosylformylglycinamidine cyclo-ligase of Streptococcus thermophilus (strain ATCC BAA-491 / LMD-9).